The primary structure comprises 342 residues: Putative aryl-alcohol dehydrogenase AAD16 (342 aa).

The protein belongs to the aldo/keto reductase family. Aldo/keto reductase 2 subfamily.

Its function is as follows. Putative aryl-alcohol dehydrogenase. This is Putative aryl-alcohol dehydrogenase AAD16 from Saccharomyces cerevisiae (strain ATCC 204508 / S288c) (Baker's yeast).